A 142-amino-acid chain; its full sequence is SPbeta prophage-derived deoxyuridine 5'-triphosphate nucleotidohydrolase YosS (142 aa).

2 residues coordinate dUMP: Ser-62 and Asn-74. Asp-80 functions as the Proton acceptor in the catalytic mechanism. 2 residues coordinate dUMP: Tyr-83 and Phe-91.

The protein belongs to the dUTPase family. As to quaternary structure, homotrimer. It depends on Mg(2+) as a cofactor.

It catalyses the reaction dUTP + H2O = dUMP + diphosphate + H(+). The protein operates within pyrimidine metabolism; dUMP biosynthesis; dUMP from dCTP (dUTP route): step 2/2. Involved in nucleotide metabolism: produces dUMP, the immediate precursor of thymidine nucleotides and decreases the intracellular concentration of dUTP, so that uracil cannot be incorporated into DNA. The Ser-62 side chain changes its position upon ligand-binding to make contacts with the nucleotide phosphates. This Bacillus subtilis (strain 168) protein is SPbeta prophage-derived deoxyuridine 5'-triphosphate nucleotidohydrolase YosS.